A 168-amino-acid polypeptide reads, in one-letter code: Large ribosomal subunit protein uL10 (168 aa).

Belongs to the universal ribosomal protein uL10 family. In terms of assembly, part of the ribosomal stalk of the 50S ribosomal subunit. The N-terminus interacts with L11 and the large rRNA to form the base of the stalk. The C-terminus forms an elongated spine to which L12 dimers bind in a sequential fashion forming a multimeric L10(L12)X complex.

Its function is as follows. Forms part of the ribosomal stalk, playing a central role in the interaction of the ribosome with GTP-bound translation factors. In Mycoplasmopsis pulmonis (strain UAB CTIP) (Mycoplasma pulmonis), this protein is Large ribosomal subunit protein uL10 (rplJ).